Reading from the N-terminus, the 129-residue chain is Histone H2A-IV (129 aa).

Positions 1–22 (MSGRGKQGGKARAKAKSRSSRA) are disordered. Serine 2 is subject to N-acetylserine. A Phosphoserine modification is found at serine 2. Position 6 is an N6-(2-hydroxyisobutyryl)lysine (lysine 6). Lysine 6 and lysine 10 each carry N6-acetyllysine. Positions 7–19 (QGGKARAKAKSRS) are enriched in basic residues. At lysine 10 the chain carries N6-(2-hydroxyisobutyryl)lysine; alternate. The residue at position 10 (lysine 10) is an N6-lactoyllysine; alternate. At lysine 10 the chain carries N6-succinyllysine. Glycyl lysine isopeptide (Lys-Gly) (interchain with G-Cter in ubiquitin) cross-links involve residues lysine 14 and lysine 16. Position 37 is an N6-(2-hydroxyisobutyryl)lysine; alternate (lysine 37). Lysine 75 and lysine 76 each carry N6-(2-hydroxyisobutyryl)lysine. The residue at position 96 (lysine 96) is an N6-(2-hydroxyisobutyryl)lysine; alternate. Lysine 96 is modified (N6-succinyllysine). Lysine 96 carries the N6-glutaryllysine; alternate modification. Position 100 is an N6-glutaryllysine (lysine 100). N5-methylglutamine is present on glutamine 105. The residue at position 119 (lysine 119) is an N6-(2-hydroxyisobutyryl)lysine; alternate. N6-glutaryllysine; alternate is present on residues lysine 119 and lysine 120. Residue lysine 120 forms a Glycyl lysine isopeptide (Lys-Gly) (interchain with G-Cter in ubiquitin) linkage.

Belongs to the histone H2A family. The nucleosome is a histone octamer containing two molecules each of H2A, H2B, H3 and H4 assembled in one H3-H4 heterotetramer and two H2A-H2B heterodimers. The octamer wraps approximately 147 bp of DNA. In terms of processing, monoubiquitination of Lys-120 (H2AK119Ub) gives a specific tag for epigenetic transcriptional repression. Following DNA double-strand breaks (DSBs), it is ubiquitinated through 'Lys-63' linkage of ubiquitin moieties, leading to the recruitment of repair proteins to sites of DNA damage. H2AK119Ub and ionizing radiation-induced 'Lys-63'-linked ubiquitination are distinct events. Phosphorylation on Ser-2 is enhanced during mitosis. Phosphorylation on Ser-2 directly represses transcription. Post-translationally, glutamine methylation at Gln-105 (H2AQ104me) by FBL is specifically dedicated to polymerase I. It is present at 35S ribosomal DNA locus and impairs binding of the FACT complex.

It is found in the nucleus. It localises to the chromosome. Functionally, core component of nucleosome. Nucleosomes wrap and compact DNA into chromatin, limiting DNA accessibility to the cellular machineries which require DNA as a template. Histones thereby play a central role in transcription regulation, DNA repair, DNA replication and chromosomal stability. DNA accessibility is regulated via a complex set of post-translational modifications of histones, also called histone code, and nucleosome remodeling. This chain is Histone H2A-IV, found in Gallus gallus (Chicken).